The chain runs to 182 residues: UPF0397 protein BCAH820_2657 (182 aa).

5 helical membrane-spanning segments follow: residues 9-29 (VVAI…GFTI), 40-60 (AILT…IGLI), 71-91 (WGIW…MGFI), 114-134 (ITGL…DIIV), and 142-162 (IVIQ…VLGL).

This sequence belongs to the UPF0397 family.

It localises to the cell membrane. The polypeptide is UPF0397 protein BCAH820_2657 (Bacillus cereus (strain AH820)).